Reading from the N-terminus, the 303-residue chain is Albumin b-32 (303 aa).

Low complexity predominate over residues 112–137 (ATPTSSATTPGGSASAAGTRTSSATR). Positions 112-175 (ATPTSSATTP…GGGGADADAD (64 aa)) are disordered. Over residues 146–156 (ARDDQGRQRPG) the composition is skewed to basic and acidic residues.

The protein belongs to the ribosome-inactivating protein family. Type 1 RIP subfamily. As to quaternary structure, monomer. Endosperm.

Its subcellular location is the cytoplasm. The enzyme catalyses Endohydrolysis of the N-glycosidic bond at one specific adenosine on the 28S rRNA.. Functionally, a possible regulatory factor for the synthesis of zeins, the major group of storage proteins. The chain is Albumin b-32 (O6) from Zea mays (Maize).